The sequence spans 360 residues: F-box protein SKP2A (360 aa).

In terms of domain architecture, F-box spans 25–71; it reads IKEWKDIPVELLMRILSLVDDRNVIVASGVCTGWRDAISFGLTRLRL. (indol-3-yl)acetate contacts are provided by residues 127–128, 149–152, 175–178, and asparagine 202; these read SL, NLSG, and NLCG.

In terms of assembly, part of a SCF (ASK-cullin-F-box) protein ligase complex. Interacts with CUL1 (RUB1-modified and non-modified isoforms), SKP1A, SKP1B and ASK18. Recruit DPB and phosphorylated E2FC. Interacts with auxin. Auxin controls the interaction with DPB. In terms of processing, polyubiquitinated and subsequently targeted to proteasome. Auxin promotes this ubiquitination-mediated degradation. In terms of tissue distribution, expressed in embryo, seedlings, hypocotyl, roots, leaves and flowers.

The protein resides in the nucleus. It functions in the pathway protein modification; protein ubiquitination. Functionally, component of SCF(SKP2A) E3 ubiquitin ligase complexes, which mediate the ubiquitination and subsequent proteasomal degradation of target proteins (including cell cycle repressors). Acts as an auxin receptor; one active auxin is indole-3-acetate. Regulates the stability of the transcription factors E2FC and DPB, repressors of cell proliferation. Confers increase tolerance to osmotic stress by promoting cell division, especially in meristems. Promotes the formation of lateral root primordia. The protein is F-box protein SKP2A (SKP2A) of Arabidopsis thaliana (Mouse-ear cress).